Reading from the N-terminus, the 201-residue chain is Probable quinol oxidase subunit 3 (201 aa).

The next 5 membrane-spanning stretches (helical) occupy residues 20–40 (LGFW…FATL), 62–82 (LVLI…IAIY), 91–111 (LMLI…GFEI), 133–153 (FFIL…WIIC), and 180–200 (FLDV…MVFS).

This sequence belongs to the cytochrome c oxidase subunit 3 family.

The protein localises to the cell membrane. The enzyme catalyses 2 a quinol + O2 = 2 a quinone + 2 H2O. Functionally, catalyzes quinol oxidation with the concomitant reduction of oxygen to water. The protein is Probable quinol oxidase subunit 3 (qoxC) of Staphylococcus saprophyticus subsp. saprophyticus (strain ATCC 15305 / DSM 20229 / NCIMB 8711 / NCTC 7292 / S-41).